We begin with the raw amino-acid sequence, 694 residues long: TBC1 domain family member 14 (694 aa).

Serine 92 bears the Phosphoserine mark. Residues 272–289 (TAQKDSKKTQKEYEDKAG) show a composition bias toward basic and acidic residues. The segment at 272–305 (TAQKDSKKTQKEYEDKAGRPSRPPSPKQNVRKNL) is disordered. Residue serine 296 is modified to Phosphoserine. Residues 402-612 (GIPPSVRGKV…RIWDVFCRDG (211 aa)) enclose the Rab-GAP TBC domain.

As to quaternary structure, interacts with ULK1. May interact with RAB11A and RAB11B, but does not exhibit any GTPase-activating activity toward these proteins. Interacts with TRAPPC8.

Its subcellular location is the golgi apparatus. It is found in the cis-Golgi network. The protein resides in the trans-Golgi network. Functionally, plays a role in the regulation of starvation-induced autophagosome formation. Together with the TRAPPIII complex, regulates a constitutive trafficking step from peripheral recycling endosomes to the early Golgi, maintaining the cycling pool of ATG9 required for initiation of autophagy. This chain is TBC1 domain family member 14 (Tbc1d14), found in Mus musculus (Mouse).